The primary structure comprises 150 residues: Arginine repressor (150 aa).

The protein belongs to the ArgR family.

Its subcellular location is the cytoplasm. The protein operates within amino-acid biosynthesis; L-arginine biosynthesis [regulation]. In terms of biological role, regulates arginine biosynthesis genes. This Halothermothrix orenii (strain H 168 / OCM 544 / DSM 9562) protein is Arginine repressor.